The following is a 188-amino-acid chain: Peptidyl-tRNA hydrolase (188 aa).

Phenylalanine 14 serves as a coordination point for tRNA. The active-site Proton acceptor is histidine 19. Positions 64, 66, and 112 each coordinate tRNA.

It belongs to the PTH family. In terms of assembly, monomer.

Its subcellular location is the cytoplasm. The catalysed reaction is an N-acyl-L-alpha-aminoacyl-tRNA + H2O = an N-acyl-L-amino acid + a tRNA + H(+). Its function is as follows. Hydrolyzes ribosome-free peptidyl-tRNAs (with 1 or more amino acids incorporated), which drop off the ribosome during protein synthesis, or as a result of ribosome stalling. In terms of biological role, catalyzes the release of premature peptidyl moieties from peptidyl-tRNA molecules trapped in stalled 50S ribosomal subunits, and thus maintains levels of free tRNAs and 50S ribosomes. This chain is Peptidyl-tRNA hydrolase, found in Onion yellows phytoplasma (strain OY-M).